The primary structure comprises 433 residues: MTAPTLNTTRSQELFSAAQALMPGGVSSPVRAFRSVGGQPLVFDRVKGPYAWDVDGNKYIDYIGSWGPAICGHAHPEVISALQEAIEKGTSFGAPCALENTLAEMVIDAVPSVEMVRFVNSGTEACMAVLRLMRAFTGRDKVIKFEGCYHGHADMFLVKAGSGVATLGLPDSPGVPRSTTANTLTAPYNDLEAVKQLFAENPDAISGVILEPIVGNAGFIQPEPGFLEGLRELTKEHGALLVFDEVMTGFRISYGGAQAHFGVTPDLTTMGKVIGGGLPVGAYGGRRDIMEMVAPAGPMYQAGTLSGNPLAMTAGIKTLELLRQPGTYEKLTATTEKLIAGIKEAASAAGLPITGGSVSAMFGFFLCEGPVRNFEEAKATDAERFGKLHRAMLQRGVYLAPSAFEAGFTSLAHSDGDIEATLQAFRESFAEIA.

At lysine 272 the chain carries N6-(pyridoxal phosphate)lysine.

Belongs to the class-III pyridoxal-phosphate-dependent aminotransferase family. HemL subfamily. Homodimer. The cofactor is pyridoxal 5'-phosphate.

The protein resides in the cytoplasm. It carries out the reaction (S)-4-amino-5-oxopentanoate = 5-aminolevulinate. It participates in porphyrin-containing compound metabolism; protoporphyrin-IX biosynthesis; 5-aminolevulinate from L-glutamyl-tRNA(Glu): step 2/2. The protein operates within porphyrin-containing compound metabolism; chlorophyll biosynthesis. The chain is Glutamate-1-semialdehyde 2,1-aminomutase from Synechococcus sp. (strain WH7803).